A 290-amino-acid polypeptide reads, in one-letter code: Outer dense fiber protein 4 (290 aa).

Serine 28 is subject to Phosphoserine. 4 helical membrane-spanning segments follow: residues 44-64, 125-145, 164-184, and 201-221; these read AQVVASEFSLVAFLLLLVMVF, PVFGVAKISFTLAIGLGFVLT, LIGIILSFCEVTLIFLTLLLF, and IGWSYFIGWLVLILYFTCGIL. Positions 247–290 are disordered; the sequence is GPESLVSPSQTPSSQENSQESPKDDQKPSSPDKVVSPPQPDTTG. Positions 252–266 are enriched in polar residues; the sequence is VSPSQTPSSQENSQE.

In terms of tissue distribution, expressed in testis.

Its subcellular location is the membrane. Its function is as follows. Component of the outer dense fibers (ODF) of spermatozoa which could be involved in sperm tail structure, sperm movement and general organization of cellular cytoskeleton. This Mus musculus (Mouse) protein is Outer dense fiber protein 4 (Odf4).